Consider the following 418-residue polypeptide: Protein fuzzy homolog (418 aa).

The protein belongs to the fuzzy family. Interacts with rsg1. Interacts with intu and wdpcp; fuz, intu and wdpcp probably form the core CPLANE (ciliogenesis and planar polarity effectors) complex.

The protein resides in the cytoplasm. It localises to the cytoskeleton. Its subcellular location is the cilium basal body. Probable planar cell polarity effector involved in cilium biogenesis. Proposed to function as core component of the CPLANE (ciliogenesis and planar polarity effectors) complex involved in the recruitment of peripheral IFT-A proteins to basal bodies. May regulate protein and membrane transport to the cilium. May control the organization of the apical actin cytoskeleton, which is essential for the normal orientation of elongating ciliary microtubules. This is Protein fuzzy homolog (fuz) from Xenopus tropicalis (Western clawed frog).